Reading from the N-terminus, the 168-residue chain is DAZ-associated protein 2 (168 aa).

Residues 1 to 13 (MNSKGQYPTQPTY) are compositionally biased toward low complexity. The tract at residues 1 to 25 (MNSKGQYPTQPTYPVQPPGNPVYPQ) is disordered. Residues 39-42 (PPAY) carry the PPAY motif. A Phosphoserine modification is found at Ser-77.

As to quaternary structure, interacts with SOX6. Interacts with DAZ1 and DAZL. Interacts with IL17RB. May interact with FAM168B. Interacts with INCA1. Interacts with EIF4G1 and EIF4G2. Interacts (via PPAY motif) with NEDD4 (via WW domains). Interacts with transcription factor TCF4; the interaction results in localization of DAZAP2 to the nucleus. Interacts with transcription factors TCF7 and TCF7L1. Interacts with transcription factor LEF1. Interacts with serine/threonine-protein kinase HIPK2; the interaction results in phosphorylation of DAZAP2 which causes localization of DAZAP2 to the nucleus, reduces interaction of DAZAP2 with HIPK2 and prevents DAZAP2-dependent degradation of HIPK2. Interacts with ubiquitin ligase SIAH1; the interaction is decreased following phosphorylation of DAZAP2 by HIPK2. Interacts with TP53; the interaction is triggered by DNA damage. Ubiquitinated by SMURF2, leading to proteasomal degradation. Ubiquitinated by NEDD4, leading to proteasomal degradation. Post-translationally, following DNA damage, phosphorylated by HIPK2 which promotes DAZAP2 localization to the nucleus, reduces interaction of DAZAP2 with HIPK2 and SIAH1, and prevents DAZAP2-dependent ubiquitination of HIPK2 by E3 ubiquitin-protein ligase SIAH1 and subsequent HIPK2 proteasomal degradation.

The protein resides in the cytoplasm. Its subcellular location is the nucleus. It localises to the nucleus speckle. The protein localises to the nuclear body. It is found in the stress granule. In terms of biological role, in unstressed cells, promotes SIAH1-mediated polyubiquitination and degradation of the serine/threonine-protein kinase HIPK2, probably by acting as a loading factor that potentiates complex formation between HIPK2 and ubiquitin ligase SIAH1. In response to DNA damage, localizes to the nucleus following phosphorylation by HIPK2 and modulates the expression of a subset of TP53/p53 target genes by binding to TP53 at target gene promoters. This limits the expression of a number of cell death-mediating TP53 target genes, reducing DNA damage-induced cell death. Enhances the binding of transcription factor TCF7L2/TCF4, a Wnt signaling pathway effector, to the promoters of target genes. Plays a role in stress granule formation. This is DAZ-associated protein 2 from Macaca fascicularis (Crab-eating macaque).